The following is a 589-amino-acid chain: Aspartate--tRNA ligase (589 aa).

Glu-174 serves as a coordination point for L-aspartate. Residues 198–201 (QLFK) form an aspartate region. Residue Arg-220 participates in L-aspartate binding. ATP-binding positions include 220-222 (RDE) and Gln-229. His-448 lines the L-aspartate pocket. Residue Glu-483 participates in ATP binding. Arg-490 contacts L-aspartate. ATP is bound at residue 535–538 (GIDR).

This sequence belongs to the class-II aminoacyl-tRNA synthetase family. Type 1 subfamily. Homodimer.

Its subcellular location is the cytoplasm. It catalyses the reaction tRNA(Asp) + L-aspartate + ATP = L-aspartyl-tRNA(Asp) + AMP + diphosphate. Its function is as follows. Catalyzes the attachment of L-aspartate to tRNA(Asp) in a two-step reaction: L-aspartate is first activated by ATP to form Asp-AMP and then transferred to the acceptor end of tRNA(Asp). The protein is Aspartate--tRNA ligase of Xylella fastidiosa (strain M12).